A 1023-amino-acid polypeptide reads, in one-letter code: Solute carrier family 12 member 3 (1023 aa).

Topologically, residues 1–134 are cytoplasmic; it reads MELPGDGVHL…EPPPEPPRFG (134 aa). Residues 91–131 are disordered; that stretch reads DPEQDDFKPPMYEETAGERMGGGDSSEEEEEEHKEPPPEPP. Residues 135-164 traverse the membrane as a discontinuously helical segment; it reads WVQGVMIRCMLNIWGVILYLRLPWITAQAG. Na(+) contacts are provided by Leu145 and Trp148. The chain crosses the membrane as a helical span at residues 165-186; the sequence is IGLTWVIILLSSFITGITGLST. The Cytoplasmic segment spans residues 187–217; the sequence is SAIATNGKVKGGGTYFLISRSLGPELGGSIG. The helical transmembrane segment at 218–240 threads the bilayer; sequence LIFAFANAVAVAMHTVGFAETVT. Over 241-252 the chain is Extracellular; sequence DLMRENGVVMVD. The next 2 helical transmembrane spans lie at 253–277 and 278–300; these read PINDIRIVGVITVTCLLGISMAGME and WESKAQVLFFLVIMVSFVNYIVG. Residues 301–335 lie on the Extracellular side of the membrane; sequence TIIPASPQKQAKGFFSYKAEIFAANFVPGWRGKEG. A discontinuously helical transmembrane segment spans residues 336 to 357; that stretch reads SFFGMFSIFFPSATGILAGANI. Gly350, Ile351, and Leu352 together coordinate chloride. Over 358-368 the chain is Cytoplasmic; the sequence is SGDLKDPTVAI. A helical transmembrane segment spans residues 369-390; that stretch reads PRGTLMAIFWTTISYLIISATI. Topologically, residues 391–452 are extracellular; that stretch reads GACVVRDASG…YQSMSLVSAF (62 aa). Asn403 and Asn414 each carry an N-linked (GlcNAc...) asparagine glycan. Cystine bridges form between Cys415–Cys420 and Cys429–Cys435. N-linked (GlcNAc...) asparagine glycosylation is present at Asn432. Residues 453–476 form a helical membrane-spanning segment; sequence APLISAGIFGATLSSALACLVSAP. Residues Ala463, Ser466, and Ser467 each contribute to the Na(+) site. At 477 to 506 the chain is on the cytoplasmic side; that stretch reads KVFQCLCKDQLYPLIGFFGKGYGKNAEPLR. Residues 507–521 form a helical membrane-spanning segment; that stretch reads AYLLTYVIAVCFVLI. At 522-526 the chain is on the extracellular side; sequence AELNT. Residues 527–543 traverse the membrane as a helical segment; that stretch reads IAPIISNFFLCSYALIN. A chloride-binding site is contributed by Tyr539. Residues 544 to 566 lie on the Cytoplasmic side of the membrane; it reads FSCFHASVTNSPGWRPSFRFYSK. Helical transmembrane passes span 567-586 and 587-598; these read WLSLLGAVCCVVIMFLLTWW and AALIAFGVVFFL. Residues 599 to 1023 lie on the Cytoplasmic side of the membrane; that stretch reads LGYTLYKKPA…QENVLTFYCQ (425 aa). Residues 614–629 are scissor helix; that stretch reads SVQASSYSMALNQCVG. ATP is bound by residues Leu647, Arg654, Val676, Gly733, and Leu772.

Belongs to the SLC12A transporter family. As to quaternary structure, homodimer; adopts a domain-swap conformation at the scissor helices connecting the transmembrane domain and C-terminal domain. In terms of tissue distribution, expressed in urinary bladder, intestine, ovary, skeletal muscle, eye, brain, and kidney.

It is found in the cell membrane. It carries out the reaction chloride(out) + Na(+)(out) = chloride(in) + Na(+)(in). Inhibited by thiazide-type diuretics including polythiazide, metolazone, cyclothiazide, hydrochlorothiazide and chlorthalidone. Thiazide drugs, specifically inhibit SLC12A3/NCC transporter activity by competing with chloride for binding. Functionally, electroneutral sodium and chloride ion cotransporter, with a coupling ratio 1 Na(+):1 Cl(-). Mediates sodium and chloride reabsorption. The protein is Solute carrier family 12 member 3 (slc12a3) of Pseudopleuronectes americanus (Winter flounder).